The following is a 234-amino-acid chain: Small ribosomal subunit protein uS5 (234 aa).

Positions M1–E10 are enriched in polar residues. Residues M1–K69 form a disordered region. Positions V11–N31 are enriched in basic and acidic residues. Positions L78 to V141 constitute an S5 DRBM domain.

This sequence belongs to the universal ribosomal protein uS5 family. Part of the 30S ribosomal subunit. Contacts proteins S4 and S8.

Functionally, with S4 and S12 plays an important role in translational accuracy. Its function is as follows. Located at the back of the 30S subunit body where it stabilizes the conformation of the head with respect to the body. The chain is Small ribosomal subunit protein uS5 from Malacoplasma penetrans (strain HF-2) (Mycoplasma penetrans).